The sequence spans 1938 residues: Histone-lysine N-methyltransferase SETD1B (1938 aa).

Positions Met-1 to Arg-20 are enriched in basic and acidic residues. Residues Met-1 to Ser-44 are disordered. The 89-residue stretch at Asp-111–Lys-199 folds into the RRM domain. Disordered regions lie at residues Leu-226–Phe-357, Phe-369–Ala-484, Leu-496–Pro-630, Gly-652–Pro-688, Lys-916–Val-1125, His-1147–Asp-1174, Met-1187–Glu-1206, Lys-1327–Leu-1373, Phe-1413–Met-1468, Glu-1496–Pro-1528, and Asp-1744–Glu-1772. Polar residues-rich tracts occupy residues Val-254–Pro-290, Pro-298–Pro-312, Leu-375–Ser-407, and Asp-446–Gln-457. A compositionally biased stretch (low complexity) spans Ser-512–Ser-531. 2 stretches are compositionally biased toward polar residues: residues His-532 to Gly-546 and Ser-569 to Gln-585. Basic and acidic residues predominate over residues Arg-588 to Val-599. Residues Glu-619–Val-628 are compositionally biased toward acidic residues. Acidic residues-rich tracts occupy residues Ser-976–Glu-990 and Asp-1054–Phe-1114. Basic and acidic residues predominate over residues Lys-1159–Asp-1174. Over residues Leu-1329–Leu-1343 the composition is skewed to basic and acidic residues. Polar residues-rich tracts occupy residues Leu-1349–Ile-1358 and Glu-1441–Pro-1453. Residues Ser-1454–Gly-1464 show a composition bias toward pro residues. A compositionally biased stretch (polar residues) spans Gln-1751–Ala-1765. Residues Arg-1770–Arg-1775 carry the RxxxRR motif motif. In terms of domain architecture, SET spans Lys-1799–Lys-1916. Tyr-1915 serves as a coordination point for S-adenosyl-L-methionine. The Post-SET domain maps to Val-1922–Asn-1938.

This sequence belongs to the class V-like SAM-binding methyltransferase superfamily. In terms of assembly, component of the SET1B/COMPASS complex.

The protein resides in the nucleus speckle. Its subcellular location is the chromosome. It carries out the reaction L-lysyl(4)-[histone H3] + 3 S-adenosyl-L-methionine = N(6),N(6),N(6)-trimethyl-L-lysyl(4)-[histone H3] + 3 S-adenosyl-L-homocysteine + 3 H(+). Functionally, histone methyltransferase that specifically methylates 'Lys-4' of histone H3, when part of the SET1 histone methyltransferase (HMT) complex, but not if the neighboring 'Lys-9' residue is already methylated. H3 'Lys-4' methylation represents a specific tag for epigenetic transcriptional activation. This chain is Histone-lysine N-methyltransferase SETD1B (setd1b), found in Xenopus laevis (African clawed frog).